Here is a 190-residue protein sequence, read N- to C-terminus: MIGRITGTLIEKTPPVVYVDVNGIGYEIDVPMSTLYALPDTGARVTLFTHLVVREDAHLLYGFGTASERAAFRELVKVSGIGARTALAVLSGMSVAELAQAITLQESGRLTRVPGIGKKTAERLLLEMRGKLGADIGATPHAVPDSQSDILNALLALGYSEKESLAALKTLPEGLGVSDGIRQALKALAR.

Residues 1–64 are domain I; the sequence is MIGRITGTLI…EDAHLLYGFG (64 aa). The segment at 65–137 is domain II; it reads TASERAAFRE…MRGKLGADIG (73 aa). A flexible linker region spans residues 137–141; that stretch reads GATPH. Positions 142–190 are domain III; sequence AVPDSQSDILNALLALGYSEKESLAALKTLPEGLGVSDGIRQALKALAR.

It belongs to the RuvA family. In terms of assembly, homotetramer. Forms an RuvA(8)-RuvB(12)-Holliday junction (HJ) complex. HJ DNA is sandwiched between 2 RuvA tetramers; dsDNA enters through RuvA and exits via RuvB. An RuvB hexamer assembles on each DNA strand where it exits the tetramer. Each RuvB hexamer is contacted by two RuvA subunits (via domain III) on 2 adjacent RuvB subunits; this complex drives branch migration. In the full resolvosome a probable DNA-RuvA(4)-RuvB(12)-RuvC(2) complex forms which resolves the HJ.

It is found in the cytoplasm. In terms of biological role, the RuvA-RuvB-RuvC complex processes Holliday junction (HJ) DNA during genetic recombination and DNA repair, while the RuvA-RuvB complex plays an important role in the rescue of blocked DNA replication forks via replication fork reversal (RFR). RuvA specifically binds to HJ cruciform DNA, conferring on it an open structure. The RuvB hexamer acts as an ATP-dependent pump, pulling dsDNA into and through the RuvAB complex. HJ branch migration allows RuvC to scan DNA until it finds its consensus sequence, where it cleaves and resolves the cruciform DNA. This chain is Holliday junction branch migration complex subunit RuvA, found in Bordetella avium (strain 197N).